Reading from the N-terminus, the 207-residue chain is Octanoyltransferase (207 aa).

The BPL/LPL catalytic domain occupies 27-202 (GETPDELWIV…HLETRLARPQ (176 aa)). Substrate-binding positions include 66 to 73 (RGGQITYH), 133 to 135 (SLG), and 146 to 148 (GLS). Catalysis depends on C164, which acts as the Acyl-thioester intermediate.

This sequence belongs to the LipB family.

Its subcellular location is the cytoplasm. It carries out the reaction octanoyl-[ACP] + L-lysyl-[protein] = N(6)-octanoyl-L-lysyl-[protein] + holo-[ACP] + H(+). It functions in the pathway protein modification; protein lipoylation via endogenous pathway; protein N(6)-(lipoyl)lysine from octanoyl-[acyl-carrier-protein]: step 1/2. In terms of biological role, catalyzes the transfer of endogenously produced octanoic acid from octanoyl-acyl-carrier-protein onto the lipoyl domains of lipoate-dependent enzymes. Lipoyl-ACP can also act as a substrate although octanoyl-ACP is likely to be the physiological substrate. This Laribacter hongkongensis (strain HLHK9) protein is Octanoyltransferase.